Consider the following 844-residue polypeptide: E3 ubiquitin-protein ligase BRE1-like 2 (844 aa).

2 coiled-coil regions span residues 1–38 (MDAAALQYENQKLVQQLEAQKSKMRALEGKFKELRDEQ) and 160–240 (EDVI…QLQT). The disordered stretch occupies residues 244-269 (SLMNTSAPNGVNGSVSTDKSSDKGMG). Positions 245–261 (LMNTSAPNGVNGSVSTD) are enriched in polar residues. Coiled-coil stretches lie at residues 290–604 (ELHE…SEIE) and 640–670 (KMKQAYGSLLAEKNMLQKQLQHVNSSLESSK). The RING-type zinc-finger motif lies at 792–831 (CGVCFDRPKEVVITKCFHLFCSPCIQRNLEIRHRKCPGCG).

The protein belongs to the BRE1 family.

Its subcellular location is the nucleus. It catalyses the reaction S-ubiquitinyl-[E2 ubiquitin-conjugating enzyme]-L-cysteine + [acceptor protein]-L-lysine = [E2 ubiquitin-conjugating enzyme]-L-cysteine + N(6)-ubiquitinyl-[acceptor protein]-L-lysine.. Its pathway is protein modification; protein ubiquitination. In terms of biological role, E3 ubiquitin-protein ligase that monoubiquitinates H2B to form H2BK143ub1. H2BK143ub1 gives a specific tag for epigenetic transcriptional activation and is also prerequisite for H3K4me and maybe H3K79me. It thereby plays a central role in histone code and gene regulation. Forms a ubiquitin ligase complex in cooperation with the E2 enzyme UBC2/RAD6. This is E3 ubiquitin-protein ligase BRE1-like 2 (BRE1B) from Oryza sativa subsp. indica (Rice).